The chain runs to 322 residues: NADH-cytochrome b5 reductase 2 (322 aa).

A helical transmembrane segment spans residues 32–48 (LAPIYISVGLAGLGVGL). The FAD-binding FR-type domain occupies 72-176 (QGWVDLKLSE…KGPIPKYPWE (105 aa)). 179 to 214 (KHKHICLIAGGTGITPMYQLARQIFKNPEDQTKVTL) provides a ligand contact to FAD.

This sequence belongs to the flavoprotein pyridine nucleotide cytochrome reductase family. FAD serves as cofactor.

It localises to the mitochondrion outer membrane. The catalysed reaction is 2 Fe(III)-[cytochrome b5] + NADH = 2 Fe(II)-[cytochrome b5] + NAD(+) + H(+). Its function is as follows. May mediate the reduction of outer membrane cytochrome b5. In Aspergillus clavatus (strain ATCC 1007 / CBS 513.65 / DSM 816 / NCTC 3887 / NRRL 1 / QM 1276 / 107), this protein is NADH-cytochrome b5 reductase 2 (mcr1).